The following is a 186-amino-acid chain: Methylamine dehydrogenase light chain (186 aa).

The tat-type signal signal peptide spans 1 to 57; it reads MLGKSQFDDLFEKMSRKVAGHTSRRGFIGRVGTAVAGVALVPLLPVDRRGRVSRANA. Cystine bridges form between cysteine 78–cysteine 143, cysteine 84–cysteine 116, cysteine 91–cysteine 176, cysteine 93–cysteine 141, cysteine 101–cysteine 132, and cysteine 133–cysteine 164. Tryptophan 112 carries the tryptophylquinone modification. The segment at residues 112 to 163 is a cross-link (tryptophan tryptophylquinone (Trp-Trp)); the sequence is WVASCYNPTDKQSYLISYRDCCGANVSGRCACLNTEGELPVYRPEFGNDIIW.

It belongs to the aromatic amine dehydrogenase light chain family. Heterotetramer of two light and two heavy chains. The cofactor is tryptophan tryptophylquinone residue. In terms of processing, predicted to be exported by the Tat system. The position of the signal peptide cleavage has been experimentally proven. Post-translationally, tryptophan tryptophylquinone (TTQ) is formed by oxidation of the indole ring of a tryptophan to form tryptophylquinone followed by covalent cross-linking with another tryptophan residue.

The protein localises to the periplasm. The enzyme catalyses 2 oxidized [amicyanin] + methylamine + H2O = 2 reduced [amicyanin] + formaldehyde + NH4(+) + 2 H(+). Its pathway is one-carbon metabolism; methylamine degradation; formaldehyde from methylamine: step 1/1. Its function is as follows. Methylamine dehydrogenase carries out the oxidation of methylamine. Electrons are passed from methylamine dehydrogenase to amicyanin. The chain is Methylamine dehydrogenase light chain (mauA) from Methylorubrum extorquens (strain ATCC 14718 / DSM 1338 / JCM 2805 / NCIMB 9133 / AM1) (Methylobacterium extorquens).